Consider the following 219-residue polypeptide: MSSALAVRRVGILGGTFDPVHIGHLRSALEVAEFMRLDELRLLPNARPPHRDTPQVSAQDRLAMVRDAVAGVGGLSVDDRELARDKPSYTIDTLESIRAELNTHDQLFLVLGWDAFCGLPSWHRWEELLQHCHILVLQRPDADVEPPDELRNLLAARSESDPTAMSGPAGHISFVWQTPLAVSATQIRQLLASGKSARFLVPDAVLAYIEAHDLYRASN.

The protein belongs to the NadD family.

It catalyses the reaction nicotinate beta-D-ribonucleotide + ATP + H(+) = deamido-NAD(+) + diphosphate. The protein operates within cofactor biosynthesis; NAD(+) biosynthesis; deamido-NAD(+) from nicotinate D-ribonucleotide: step 1/1. Catalyzes the reversible adenylation of nicotinate mononucleotide (NaMN) to nicotinic acid adenine dinucleotide (NaAD). The sequence is that of Probable nicotinate-nucleotide adenylyltransferase from Pseudomonas entomophila (strain L48).